A 50-amino-acid chain; its full sequence is LTTTVVSFPSDSASDGRDNEAKDERSDMYELKRNGRCCHPACGKYFKCGR.

The signal sequence occupies residues 1 to 7 (LTTTVVS). Polar residues predominate over residues 1–13 (LTTTVVSFPSDSA). Residues 1 to 26 (LTTTVVSFPSDSASDGRDNEAKDERS) are disordered. A propeptide spanning residues 8-35 (FPSDSASDGRDNEAKDERSDMYELKRNG) is cleaved from the precursor. Residues 14–26 (SDGRDNEAKDERS) are compositionally biased toward basic and acidic residues. Cystine bridges form between C37-C42 and C38-C48. C48 is subject to Cysteine amide.

The protein belongs to the conotoxin A superfamily. In terms of tissue distribution, expressed by the venom duct.

The protein localises to the secreted. The protein is Alpha-conotoxin CnIG of Conus consors (Singed cone).